A 137-amino-acid polypeptide reads, in one-letter code: Large-conductance mechanosensitive channel (137 aa).

A run of 2 helical transmembrane segments spans residues 9-29 and 79-99; these read AFAVKGNVVDMAVGIIIGAAF and IQTILDFIIVAFAIFMGVKVI.

It belongs to the MscL family. As to quaternary structure, homopentamer.

Its subcellular location is the cell inner membrane. In terms of biological role, channel that opens in response to stretch forces in the membrane lipid bilayer. May participate in the regulation of osmotic pressure changes within the cell. The polypeptide is Large-conductance mechanosensitive channel (Pseudomonas entomophila (strain L48)).